We begin with the raw amino-acid sequence, 467 residues long: L-seryl-tRNA(Sec) selenium transferase (467 aa).

Position 298 is an N6-(pyridoxal phosphate)lysine (Lys-298).

The protein belongs to the SelA family. It depends on pyridoxal 5'-phosphate as a cofactor.

It is found in the cytoplasm. It catalyses the reaction L-seryl-tRNA(Sec) + selenophosphate + H(+) = L-selenocysteinyl-tRNA(Sec) + phosphate. It participates in aminoacyl-tRNA biosynthesis; selenocysteinyl-tRNA(Sec) biosynthesis; selenocysteinyl-tRNA(Sec) from L-seryl-tRNA(Sec) (bacterial route): step 1/1. In terms of biological role, converts seryl-tRNA(Sec) to selenocysteinyl-tRNA(Sec) required for selenoprotein biosynthesis. The chain is L-seryl-tRNA(Sec) selenium transferase from Alkaliphilus oremlandii (strain OhILAs) (Clostridium oremlandii (strain OhILAs)).